The primary structure comprises 312 residues: Epoxyqueuosine reductase (312 aa).

The Proton donor role is filled by aspartate 132. Residues glutamate 174–isoleucine 206 enclose the 4Fe-4S ferredoxin-type 1 domain. [4Fe-4S] cluster-binding residues include cysteine 186, cysteine 189, cysteine 192, cysteine 196, cysteine 212, cysteine 240, cysteine 243, and cysteine 247. A 4Fe-4S ferredoxin-type 2 domain is found at proline 226–threonine 257.

This sequence belongs to the QueG family. Monomer. The cofactor is cob(II)alamin. It depends on [4Fe-4S] cluster as a cofactor.

The protein localises to the cytoplasm. The catalysed reaction is epoxyqueuosine(34) in tRNA + AH2 = queuosine(34) in tRNA + A + H2O. Its pathway is tRNA modification; tRNA-queuosine biosynthesis. Its function is as follows. Catalyzes the conversion of epoxyqueuosine (oQ) to queuosine (Q), which is a hypermodified base found in the wobble positions of tRNA(Asp), tRNA(Asn), tRNA(His) and tRNA(Tyr). The protein is Epoxyqueuosine reductase of Prochlorococcus marinus (strain NATL2A).